The sequence spans 116 residues: NADH-ubiquinone oxidoreductase chain 3 (116 aa).

3 helical membrane passes run 3 to 23 (LIMT…TVSF), 56 to 76 (FFLV…LLPL), and 87 to 107 (GTFF…IYEW).

Belongs to the complex I subunit 3 family.

It localises to the mitochondrion membrane. The catalysed reaction is a ubiquinone + NADH + 5 H(+)(in) = a ubiquinol + NAD(+) + 4 H(+)(out). Functionally, core subunit of the mitochondrial membrane respiratory chain NADH dehydrogenase (Complex I) that is believed to belong to the minimal assembly required for catalysis. Complex I functions in the transfer of electrons from NADH to the respiratory chain. The immediate electron acceptor for the enzyme is believed to be ubiquinone. The polypeptide is NADH-ubiquinone oxidoreductase chain 3 (MT-ND3) (Carassius auratus (Goldfish)).